We begin with the raw amino-acid sequence, 113 residues long: Large ribosomal subunit protein P1 (113 aa).

Residues Thr-56–Gly-66 show a composition bias toward low complexity. The disordered stretch occupies residues Thr-56–Gly-113. Over residues Glu-74–Gly-105 the composition is skewed to acidic residues.

The protein belongs to the eukaryotic ribosomal protein P1/P2 family. As to quaternary structure, part of the 50S ribosomal subunit. Homodimer, it forms part of the ribosomal stalk which helps the ribosome interact with GTP-bound translation factors. Forms a heptameric uL10/P0(P1)2(P1)2(P1)2 complex, where uL10/P0 forms an elongated spine to which the P1 dimers bind in a sequential fashion.

Its function is as follows. Forms part of the ribosomal stalk, playing a central role in the interaction of the ribosome with GTP-bound translation factors. The polypeptide is Large ribosomal subunit protein P1 (Haloferax volcanii (strain ATCC 29605 / DSM 3757 / JCM 8879 / NBRC 14742 / NCIMB 2012 / VKM B-1768 / DS2) (Halobacterium volcanii)).